A 313-amino-acid chain; its full sequence is uncharacterized protein (313 aa).

In terms of domain architecture, HTH deoR-type spans 2-57 (KLERLLAMVVLLISKKQVQAAELAELFEVSVRTIYRDIETINRAGIPIVTSQGSGG). The H-T-H motif DNA-binding region spans 19–38 (VQAAELAELFEVSVRTIYRD). Residues 131–210 (HTEDQKTLRE…KDLAILHQTF (80 aa)) enclose the WYL domain.

Its subcellular location is the cytoplasm. This is an uncharacterized protein from Bacillus subtilis (strain 168).